A 670-amino-acid polypeptide reads, in one-letter code: Rhophilin-1 (670 aa).

The disordered stretch occupies residues 1–20 (MILEERPDGAGAGEESPRLQ). In terms of domain architecture, REM-1 spans 23–97 (DSLTQIQCGQ…LEELSGGVDP (75 aa)). Position 24 is a phosphoserine (serine 24). One can recognise a BRO1 domain in the interval 108–457 (PMIPLGLKET…LAKYAELDRE (350 aa)). Residues 513-592 (PVHLTRGEGG…ASLQVVSLLP (80 aa)) form the PDZ domain. The tract at residues 616-670 (QREHGCKTPASTWASPRPLLNWSRKAQQGKTGGCPQPCAPVKPAPPSSLKHPGWP) is disordered. Residues 652–661 (PCAPVKPAPP) show a composition bias toward pro residues.

This sequence belongs to the RHPN family. In terms of assembly, binds specifically to GTP-Rho. Interacts with ROPN1.

Has no enzymatic activity. May serve as a target for Rho, and interact with some cytoskeletal component upon Rho binding or relay a Rho signal to other molecules. The protein is Rhophilin-1 of Homo sapiens (Human).